We begin with the raw amino-acid sequence, 302 residues long: Probable alpha-L-glutamate ligase (302 aa).

The region spanning 104–287 (MQLLSRKGIG…IAGMVFEFLE (184 aa)) is the ATP-grasp domain. Residues Lys-141, 178–179 (EF), Asp-187, and 211–213 (RSN) each bind ATP. Residues Asp-248, Glu-260, and Asn-262 each coordinate Mg(2+). Residues Asp-248, Glu-260, and Asn-262 each coordinate Mn(2+).

This sequence belongs to the RimK family. It depends on Mg(2+) as a cofactor. Requires Mn(2+) as cofactor.

In Psychromonas ingrahamii (strain DSM 17664 / CCUG 51855 / 37), this protein is Probable alpha-L-glutamate ligase.